Consider the following 310-residue polypeptide: MTQLAQQEKKQTYNFNKLQKRLRRNVGNAITDFGMIEDGDKVMVCLSGGKDSYTLLDILLNLQQNAPIKFDIVAVNLDQKQPGFPEHVLPEYLESIGVDYKIVQENTYGIVKEKIPEGKTTCSLCSRLRRGILYRTATELGATKIALGHHRDDMLATLFLNMFYGGKMKSMPPKLISDDGKQIVIRPLAYCKEKDIEKYAIAKEFPIIPCNLCGSQPNLQRQVVKEMLNTWDRQYPGRLETMFSAMQNITLSHMCDPKLFDFKGIKHGQLIDGIEGDTAFDEEKITPMQFEDEDQTDFSNNEMINFKEVN.

Positions Ser47 to Ser52 match the PP-loop motif motif. Residues Cys122, Cys125, and Cys213 each coordinate [4Fe-4S] cluster.

It belongs to the TtcA family. In terms of assembly, homodimer. The cofactor is Mg(2+). Requires [4Fe-4S] cluster as cofactor.

The protein resides in the cytoplasm. The enzyme catalyses cytidine(32) in tRNA + S-sulfanyl-L-cysteinyl-[cysteine desulfurase] + AH2 + ATP = 2-thiocytidine(32) in tRNA + L-cysteinyl-[cysteine desulfurase] + A + AMP + diphosphate + H(+). Its pathway is tRNA modification. Catalyzes the ATP-dependent 2-thiolation of cytidine in position 32 of tRNA, to form 2-thiocytidine (s(2)C32). The sulfur atoms are provided by the cysteine/cysteine desulfurase (IscS) system. The polypeptide is tRNA-cytidine(32) 2-sulfurtransferase (Haemophilus influenzae (strain 86-028NP)).